The chain runs to 212 residues: Thymidylate kinase (212 aa).

11–18 (GPEGAGKT) is an ATP binding site.

It belongs to the thymidylate kinase family.

It catalyses the reaction dTMP + ATP = dTDP + ADP. In terms of biological role, phosphorylation of dTMP to form dTDP in both de novo and salvage pathways of dTTP synthesis. The protein is Thymidylate kinase of Streptococcus pneumoniae serotype 19F (strain G54).